The chain runs to 431 residues: Adenylosuccinate synthetase (431 aa).

Residues 13–19 (GDEGKGK) and 41–43 (GHT) contribute to the GTP site. The active-site Proton acceptor is the Asp14. Asp14 and Gly41 together coordinate Mg(2+). Residues 14–17 (DEGK), 39–42 (NAGH), Thr130, Arg144, Gln225, Thr240, and Arg304 each bind IMP. His42 functions as the Proton donor in the catalytic mechanism. A substrate-binding site is contributed by 300–306 (ATTGRKR). Residues Arg306, 332-334 (KLD), and 415-417 (STG) contribute to the GTP site.

The protein belongs to the adenylosuccinate synthetase family. Homodimer. Requires Mg(2+) as cofactor.

Its subcellular location is the cytoplasm. The catalysed reaction is IMP + L-aspartate + GTP = N(6)-(1,2-dicarboxyethyl)-AMP + GDP + phosphate + 2 H(+). Its pathway is purine metabolism; AMP biosynthesis via de novo pathway; AMP from IMP: step 1/2. Plays an important role in the de novo pathway of purine nucleotide biosynthesis. Catalyzes the first committed step in the biosynthesis of AMP from IMP. This chain is Adenylosuccinate synthetase, found in Shewanella woodyi (strain ATCC 51908 / MS32).